Reading from the N-terminus, the 783-residue chain is Outer membrane usher protein FanD (783 aa).

An N-terminal signal peptide occupies residues 1–23; it reads MNRKKHQILKILLLCLISSKSSA. The cysteines at positions 763 and 782 are disulfide-linked.

This sequence belongs to the fimbrial export usher family.

It localises to the cell outer membrane. Its function is as follows. Involved in the export and assembly of K99 fimbrial subunits across the outer membrane. The protein is Outer membrane usher protein FanD (fanD) of Escherichia coli.